A 122-amino-acid chain; its full sequence is Venom protein 7.1 (122 aa).

The first 19 residues, 1–19 (MRFSIISASLVLIFANVKA), serve as a signal peptide directing secretion.

Post-translationally, contains 3 disulfide bonds. In terms of tissue distribution, expressed by the venom gland.

Its subcellular location is the secreted. This Lychas mucronatus (Chinese swimming scorpion) protein is Venom protein 7.1.